Consider the following 29-residue polypeptide: Cyclotide cter-K (29 aa).

The segment at residues 1–29 (HEPCGESCVFIPCITTVVGCSCKNKVCYN) is a cross-link (cyclopeptide (His-Asn)). Intrachain disulfides connect C4–C20, C8–C22, and C13–C27.

In terms of processing, contains 3 disulfide bonds. Post-translationally, this is a cyclic peptide.

In terms of biological role, probably participates in a plant defense mechanism. In Clitoria ternatea (Butterfly pea), this protein is Cyclotide cter-K.